We begin with the raw amino-acid sequence, 283 residues long: ATP phosphoribosyltransferase (283 aa).

It belongs to the ATP phosphoribosyltransferase family. Long subfamily. In terms of assembly, equilibrium between an active dimeric form, an inactive hexameric form and higher aggregates. Interconversion between the various forms is largely reversible and is influenced by the natural substrates and inhibitors of the enzyme. Mg(2+) serves as cofactor.

Its subcellular location is the cytoplasm. It carries out the reaction 1-(5-phospho-beta-D-ribosyl)-ATP + diphosphate = 5-phospho-alpha-D-ribose 1-diphosphate + ATP. It participates in amino-acid biosynthesis; L-histidine biosynthesis; L-histidine from 5-phospho-alpha-D-ribose 1-diphosphate: step 1/9. Its activity is regulated as follows. Feedback inhibited by histidine. Functionally, catalyzes the condensation of ATP and 5-phosphoribose 1-diphosphate to form N'-(5'-phosphoribosyl)-ATP (PR-ATP). Has a crucial role in the pathway because the rate of histidine biosynthesis seems to be controlled primarily by regulation of HisG enzymatic activity. The polypeptide is ATP phosphoribosyltransferase (Mycobacterium sp. (strain KMS)).